Reading from the N-terminus, the 190-residue chain is Heme-binding protein 1 (190 aa).

The protein belongs to the HEBP family. As to quaternary structure, monomer. Ubiquitously expressed. Extremely abundant in liver.

It localises to the cytoplasm. May bind free porphyrinogens that may be present in the cell and thus facilitate removal of these potentially toxic compound. Binds with a high affinity to one molecule of heme or porphyrins. It binds metalloporphyrins, free porphyrins and N-methylprotoporphyrin with similar affinities. The protein is Heme-binding protein 1 (Hebp1) of Mus musculus (Mouse).